The following is a 558-amino-acid chain: Arginine--tRNA ligase (558 aa).

Residues 119 to 129 (ANPNGPLHVGH) carry the 'HIGH' region motif.

It belongs to the class-I aminoacyl-tRNA synthetase family.

Its subcellular location is the cytoplasm. It catalyses the reaction tRNA(Arg) + L-arginine + ATP = L-arginyl-tRNA(Arg) + AMP + diphosphate. The polypeptide is Arginine--tRNA ligase (Methanoregula boonei (strain DSM 21154 / JCM 14090 / 6A8)).